Reading from the N-terminus, the 365-residue chain is Chorismate synthase (365 aa).

Arginine 48 serves as a coordination point for NADP(+). FMN-binding positions include 125–127 (RSS), 238–239 (NA), glycine 278, 293–297 (KPTSS), and arginine 319.

This sequence belongs to the chorismate synthase family. Homotetramer. The cofactor is FMNH2.

It carries out the reaction 5-O-(1-carboxyvinyl)-3-phosphoshikimate = chorismate + phosphate. The protein operates within metabolic intermediate biosynthesis; chorismate biosynthesis; chorismate from D-erythrose 4-phosphate and phosphoenolpyruvate: step 7/7. Functionally, catalyzes the anti-1,4-elimination of the C-3 phosphate and the C-6 proR hydrogen from 5-enolpyruvylshikimate-3-phosphate (EPSP) to yield chorismate, which is the branch point compound that serves as the starting substrate for the three terminal pathways of aromatic amino acid biosynthesis. This reaction introduces a second double bond into the aromatic ring system. The protein is Chorismate synthase of Ruthia magnifica subsp. Calyptogena magnifica.